Consider the following 361-residue polypeptide: S-adenosylmethionine:tRNA ribosyltransferase-isomerase (361 aa).

This sequence belongs to the QueA family. Monomer.

The protein resides in the cytoplasm. It catalyses the reaction 7-aminomethyl-7-carbaguanosine(34) in tRNA + S-adenosyl-L-methionine = epoxyqueuosine(34) in tRNA + adenine + L-methionine + 2 H(+). Its pathway is tRNA modification; tRNA-queuosine biosynthesis. In terms of biological role, transfers and isomerizes the ribose moiety from AdoMet to the 7-aminomethyl group of 7-deazaguanine (preQ1-tRNA) to give epoxyqueuosine (oQ-tRNA). This Actinobacillus pleuropneumoniae serotype 3 (strain JL03) protein is S-adenosylmethionine:tRNA ribosyltransferase-isomerase.